Here is a 120-residue protein sequence, read N- to C-terminus: MPDSRKARRIADPGLQPERTSLAWFRTMLGYGALMALAIKHNWHQAGMLFWISIGILAIVALILWHYTRNRNLMDVTNSDFSQFHVVRDKFLISLAVLSLAILFAVTHIHQLIVFIERVA.

Over 1 to 21 the chain is Cytoplasmic; sequence MPDSRKARRIADPGLQPERTS. A helical membrane pass occupies residues 22–39; the sequence is LAWFRTMLGYGALMALAI. The Periplasmic portion of the chain corresponds to 40–48; it reads KHNWHQAGM. A helical membrane pass occupies residues 49–68; the sequence is LFWISIGILAIVALILWHYT. At 69-90 the chain is on the cytoplasmic side; the sequence is RNRNLMDVTNSDFSQFHVVRDK. The helical transmembrane segment at 91–113 threads the bilayer; the sequence is FLISLAVLSLAILFAVTHIHQLI. At 114 to 120 the chain is on the periplasmic side; it reads VFIERVA.

The protein resides in the cell inner membrane. In Escherichia coli O157:H7, this protein is Inner membrane protein YidG (yidG).